The following is a 528-amino-acid chain: Beta-hexosaminidase subunit alpha (528 aa).

Residues 1–22 form the signal peptide; it reads MAGCRLWVSLLLAAALACLATA. A propeptide spanning residues 23–88 is cleaved from the precursor; the sequence is LWPWPQYIQT…PRPSFSNKQQ (66 aa). Cys-58 and Cys-104 form a disulfide bridge. N-linked (GlcNAc...) asparagine glycosylation is found at Asn-115, Asn-157, and Asn-295. A disulfide bridge connects residues Cys-277 and Cys-328. The Proton donor role is filled by Glu-323. Positions 422–423 are critical for hydrolysis GM2 gangliosides; the sequence is NR. Asn-487 is a glycosylation site (N-linked (GlcNAc...) asparagine). Cys-504 and Cys-521 form a disulfide bridge.

This sequence belongs to the glycosyl hydrolase 20 family. There are 3 beta-hexosaminidase isozymes: isozyme A (hexosaminidase A) is a heterodimer composed of one subunit alpha and one subunit beta (chain A and B); isozyme B (hexosaminidase B) is a homodimer of two beta subunits (two chains A and B); isozyme S (hexosaminidase S) is a homodimer of two alpha subunits. The composition of the dimer (isozyme A versus isozyme S) has a significant effect on the substrate specificity of the alpha subunit active site. As to expression, ubiquitous. Most abundant in testis, adrenal, epididymis and heart. Low levels seen in the liver.

Its subcellular location is the lysosome. The enzyme catalyses Hydrolysis of terminal non-reducing N-acetyl-D-hexosamine residues in N-acetyl-beta-D-hexosaminides.. The catalysed reaction is N-acetyl-beta-D-galactosaminyl-(1-&gt;4)-beta-D-3-sulfogalactosyl-(1-&gt;4)-beta-D-glucosyl-(1&lt;-&gt;1')-ceramide + H2O = a beta-D-3-sulfogalactosyl-(1-&gt;4)-beta-D-glucosyl-(1&lt;-&gt;1')-ceramide + N-acetyl-beta-D-galactosamine. It catalyses the reaction a ganglioside GM2 (d18:1(4E)) + H2O = a ganglioside GM3 (d18:1(4E)) + N-acetyl-beta-D-galactosamine. It carries out the reaction a ganglioside GM2 + H2O = a ganglioside GM3 + N-acetyl-beta-D-galactosamine. The enzyme catalyses beta-D-GalNAc-(1-&gt;4)-alpha-L-IdoA-(1-&gt;3)-beta-D-GalNAc-4-sulfate-(1-&gt;4)-alpha-L-IdoA-(1-&gt;3)-D-GalNAc-4-sulfate + H2O = alpha-L-IdoA-(1-&gt;3)-beta-D-GalNAc-4-sulfate-(1-&gt;4)-alpha-L-IdoA-(1-&gt;3)-D-GalNAc-4-sulfate + N-acetyl-D-galactosamine. The catalysed reaction is N-acetyl-beta-D-6-sulfogalactosaminyl-(1-&gt;4)-alpha-L-iduronyl-(1-&gt;3)-N-acetyl-D-6-sulfogalactosamine + H2O = alpha-L-iduronyl-(1-&gt;3)-N-acetyl-D-6-sulfogalactosamine + N-acetyl-D-6-sulfogalactosamine. Its activity is regulated as follows. Addition of GM2A stimulates the hydrolysis of sulfated glycosphingolipid SM2 and the ganglioside GM2. Hydrolyzes the non-reducing end N-acetyl-D-hexosamine and/or sulfated N-acetyl-D-hexosamine of glycoconjugates, such as the oligosaccharide moieties from proteins and neutral glycolipids, or from certain mucopolysaccharides. The isozyme S is as active as the isozyme A on the anionic bis-sulfated glycans, the chondroitin-6-sulfate trisaccharide (C6S-3), and the dermatan sulfate pentasaccharide, and the sulfated glycosphingolipid SM2. The isozyme B does not hydrolyze each of these substrates, however hydrolyzes efficiently neutral oligosaccharide. Only the isozyme A is responsible for the degradation of GM2 gangliosides in the presence of GM2A. The chain is Beta-hexosaminidase subunit alpha from Mus musculus (Mouse).